The primary structure comprises 255 residues: Geranylgeranylglyceryl phosphate synthase (255 aa).

The Mg(2+) site is built by Asp25 and Ser54. Residues 173-179, 203-204, and 225-226 each bind sn-glycerol 1-phosphate; these read YLEGGSG, GG, and GT.

This sequence belongs to the GGGP/HepGP synthase family. Group II subfamily. Requires Mg(2+) as cofactor.

Its subcellular location is the cytoplasm. It carries out the reaction sn-glycerol 1-phosphate + (2E,6E,10E)-geranylgeranyl diphosphate = sn-3-O-(geranylgeranyl)glycerol 1-phosphate + diphosphate. It participates in membrane lipid metabolism; glycerophospholipid metabolism. In terms of biological role, prenyltransferase that catalyzes the transfer of the geranylgeranyl moiety of geranylgeranyl diphosphate (GGPP) to the C3 hydroxyl of sn-glycerol-1-phosphate (G1P). This reaction is the first ether-bond-formation step in the biosynthesis of archaeal membrane lipids. The polypeptide is Geranylgeranylglyceryl phosphate synthase (Thermofilum pendens (strain DSM 2475 / Hrk 5)).